The following is a 65-amino-acid chain: Alpha-like toxin Bom4 (65 aa).

Positions 2 to 64 (RDAYIAQPEN…VPIRIPGKCH (63 aa)) constitute an LCN-type CS-alpha/beta domain. Disulfide bonds link Cys-12–Cys-63, Cys-16–Cys-36, Cys-22–Cys-46, and Cys-26–Cys-48.

Belongs to the long (4 C-C) scorpion toxin superfamily. Sodium channel inhibitor family. Alpha subfamily. As to expression, expressed by the venom gland.

It is found in the secreted. In terms of biological role, alpha toxins bind voltage-independently at site-3 of sodium channels (Nav) and inhibit the inactivation of the activated channels, thereby blocking neuronal transmission. This alpha-like toxin is highly toxic to mice and insects. In Buthus occitanus mardochei (Moroccan scorpion), this protein is Alpha-like toxin Bom4.